The chain runs to 131 residues: MAKGHRSKIKRERNEVRDTRPSAKLSYARVSVQKACFVLDAIRGKSVNEALAIVTYNPRYASSLVKKLLESAIANAENNYPEKNYKAENLYVAECFANKGPTMKRIHPRAQGRAYRIEKRMSHITIVLDER.

Residues 1–11 (MAKGHRSKIKR) show a composition bias toward basic residues. The segment at 1 to 20 (MAKGHRSKIKRERNEVRDTR) is disordered.

It belongs to the universal ribosomal protein uL22 family. In terms of assembly, part of the 50S ribosomal subunit.

This protein binds specifically to 23S rRNA; its binding is stimulated by other ribosomal proteins, e.g. L4, L17, and L20. It is important during the early stages of 50S assembly. It makes multiple contacts with different domains of the 23S rRNA in the assembled 50S subunit and ribosome. In terms of biological role, the globular domain of the protein is located near the polypeptide exit tunnel on the outside of the subunit, while an extended beta-hairpin is found that lines the wall of the exit tunnel in the center of the 70S ribosome. The sequence is that of Large ribosomal subunit protein uL22 from Agathobacter rectalis (strain ATCC 33656 / DSM 3377 / JCM 17463 / KCTC 5835 / VPI 0990) (Eubacterium rectale).